The chain runs to 517 residues: Perilipin-1 (517 aa).

A Phosphoserine modification is found at Ser-81. Thr-85 carries the phosphothreonine modification. Phosphoserine occurs at positions 126, 130, 132, 137, and 174. The segment at 195-216 (DKESAPSSGRQRTQKAPKAKPS) is disordered. A phosphothreonine mark is found at Thr-223, Thr-298, and Thr-300. The segment at 286 to 320 (LAASQDESHDDQTDTEGEETDDEEEEEESEAEENV) is disordered. The tract at residues 290–321 (QDESHDDQTDTEGEETDDEEEEEESEAEENVL) is required for interaction with CIDEC. A compositionally biased stretch (acidic residues) spans 298-318 (TDTEGEETDDEEEEEESEAEE). Phosphoserine is present on residues Ser-314, Ser-384, Ser-386, Ser-410, Ser-433, Ser-439, Ser-460, Ser-492, and Ser-494. A disordered region spans residues 425–490 (SAEAERKGSG…AMPREKPARR (66 aa)).

It belongs to the perilipin family. Interacts with ABHD5. Interacts with CIDEC. Interacts with AQP7. Post-translationally, major cAMP-dependent protein kinase-substrate in adipocytes, also dephosphorylated by PP1. When phosphorylated, may be maximally sensitive to HSL and when unphosphorylated, may play a role in the inhibition of lipolysis, by acting as a barrier in lipid droplet.

The protein resides in the endoplasmic reticulum. Its subcellular location is the lipid droplet. Modulator of adipocyte lipid metabolism. Coats lipid storage droplets to protect them from breakdown by hormone-sensitive lipase (HSL). Its absence may result in leanness. Plays a role in unilocular lipid droplet formation by activating CIDEC. Their interaction promotes lipid droplet enlargement and directional net neutral lipid transfer. May modulate lipolysis and triglyceride levels. This chain is Perilipin-1 (Plin1), found in Mus musculus (Mouse).